We begin with the raw amino-acid sequence, 578 residues long: 15-cis-phytoene desaturase, chloroplastic/chromoplastic (578 aa).

The transit peptide at 1–87 directs the protein to the chloroplast and chromoplast; sequence MDTGCLSSMN…PLENTINFLE (87 aa). FAD is bound by residues Ala-115, 134 to 135, Lys-142, 159 to 160, and Tyr-165; these read EA and HI. Arg-300 is a substrate binding site. Ile-342 and Asp-531 together coordinate FAD. A substrate-binding site is contributed by Ala-539. Met-541 provides a ligand contact to FAD.

Belongs to the carotenoid/retinoid oxidoreductase family. In terms of assembly, homotetramer. Homotetramer is the active form of the enzyme. The cofactor is FAD.

The protein resides in the plastid. The protein localises to the chloroplast. It is found in the chromoplast. Its subcellular location is the membrane. It carries out the reaction 2 a plastoquinone + 15-cis-phytoene = 9,9',15-tri-cis-zeta-carotene + 2 a plastoquinol. It functions in the pathway carotenoid biosynthesis; lycopene biosynthesis. Its activity is regulated as follows. Inhibited by the herbicide norflurazon (NFZ). Converts phytoene into zeta-carotene via the intermediary of phytofluene by the symmetrical introduction of two double bonds at the C-11 and C-11' positions of phytoene with a concomitant isomerization of two neighboring double bonds at the C9 and C9' positions from trans to cis. Active with decylplastoquinone (DPQ) as substrate. Also active with other benzoquinones, which are strongly preferred over naphthoquinones as substrates. This is 15-cis-phytoene desaturase, chloroplastic/chromoplastic (PDS1) from Oryza sativa subsp. indica (Rice).